Here is a 108-residue protein sequence, read N- to C-terminus: MATPRVHVKKGDTVMVITGKDAGKKGKVLSVEPARGRVVVEGVNIVKRHTRPTQKMPQGGIIEKEAPVASSNVMLFCNKCNRPTRIGRQILADGTKTRVCKKCGEVID.

The protein belongs to the universal ribosomal protein uL24 family. In terms of assembly, part of the 50S ribosomal subunit.

Its function is as follows. One of two assembly initiator proteins, it binds directly to the 5'-end of the 23S rRNA, where it nucleates assembly of the 50S subunit. One of the proteins that surrounds the polypeptide exit tunnel on the outside of the subunit. The chain is Large ribosomal subunit protein uL24 from Moorella thermoacetica (strain ATCC 39073 / JCM 9320).